Reading from the N-terminus, the 259-residue chain is Short-chain dehydrogenase chry4 (259 aa).

7 residues coordinate NADP(+): Arg37, Asp55, Asn81, Tyr154, Lys158, Val185, and Thr187. Tyr154 (proton donor) is an active-site residue. The active-site Lowers pKa of active site Tyr is Lys158.

Belongs to the short-chain dehydrogenases/reductases (SDR) family.

Its pathway is pigment biosynthesis. Short-chain dehydrogenase; part of the gene cluster that mediates the biosynthesis of the yellow pigment chrysogine. Pyruvic acid and anthranilic acid are likely substrates for the nonribosomal peptide synthetase chry1/NRPS14, with pyruvic acid adenylated by the first A domain and anthranilic acid by the second. If pyruvic acid and anthranilic acid are merged and released from chry1/NRPS14 by hydrolysis, a subsequent amidation would lead to 2-pyruvoylaminobenzamide. This process is probably catalyzed by the amidotransferase chry2 using glutamine as amino donor. The dehydrogenase chry5 that has a terminal berberine bridge domain for C-N cyclization could catalyze the cyclization of 2-pyruvoylaminobenzamide to yield acetyl-4(3H)-quinazolidinone. A final reduction of acetyl-4(3H)-quinazolidinone catalyzed by the oxidoreductase chry4 would result in chrysogine. In Gibberella zeae (strain ATCC MYA-4620 / CBS 123657 / FGSC 9075 / NRRL 31084 / PH-1) (Wheat head blight fungus), this protein is Short-chain dehydrogenase chry4.